The sequence spans 28 residues: 3-phytase B (28 aa).

Residues 1–28 form a disordered region; sequence RDPTGCEVDQVIMVKRHGERYPSPSAGK. His-17 serves as the catalytic Nucleophile.

It belongs to the histidine acid phosphatase family.

The enzyme catalyses 1D-myo-inositol hexakisphosphate + H2O = 1D-myo-inositol 1,2,4,5,6-pentakisphosphate + phosphate. Catalyzes the hydrolysis of inorganic orthophosphate from phytate. This chain is 3-phytase B (phyB), found in Aspergillus ficuum.